A 180-amino-acid polypeptide reads, in one-letter code: Vacuolar ATPase assembly protein VMA22 (180 aa).

Positions 4-38 (QALREELDSKCLQLLSDLEELEAKRAALNARVEEG) form a coiled coil. The interval 90–113 (TPEEVGPSEASLRRRKGPTKTKEL) is disordered.

In terms of assembly, accessory component of the multisubunit proton-transporting vacuolar (V)-ATPase protein pump. Predominantly expressed in the heart, liver, kidney and testis and at lower levels in the brain and lung. Undetectable in the spleen and muscles.

It is found in the endosome. The protein localises to the lysosome. The protein resides in the endoplasmic reticulum-Golgi intermediate compartment. Its subcellular location is the cytoplasmic vesicle. It localises to the COPI-coated vesicle. It is found in the endoplasmic reticulum. Its function is as follows. Accessory component of the proton-transporting vacuolar (V)-ATPase protein pump involved in intracellular iron homeostasis. In aerobic conditions, required for intracellular iron homeostasis, thus triggering the activity of Fe(2+) prolyl hydroxylase (PHD) enzymes, and leading to HIF1A hydroxylation and subsequent proteasomal degradation. Necessary for endolysosomal acidification and lysosomal degradation. May be involved in Golgi homeostasis. This Mus musculus (Mouse) protein is Vacuolar ATPase assembly protein VMA22 (Vma22).